A 1368-amino-acid chain; its full sequence is DNA-directed RNA polymerase subunit beta (1368 aa).

Belongs to the RNA polymerase beta chain family. The RNAP catalytic core consists of 2 alpha, 1 beta, 1 beta' and 1 omega subunit. When a sigma factor is associated with the core the holoenzyme is formed, which can initiate transcription.

The catalysed reaction is RNA(n) + a ribonucleoside 5'-triphosphate = RNA(n+1) + diphosphate. Functionally, DNA-dependent RNA polymerase catalyzes the transcription of DNA into RNA using the four ribonucleoside triphosphates as substrates. This Burkholderia multivorans (strain ATCC 17616 / 249) protein is DNA-directed RNA polymerase subunit beta.